A 535-amino-acid chain; its full sequence is Palmdelphin (535 aa).

The stretch at 1-105 (MEEAELLKER…KEELQVSTKE (105 aa)) forms a coiled coil. A disordered region spans residues 423–450 (VVIDDDDDDDDDEEADKKGEENTKESVS). The segment covering 424–436 (VIDDDDDDDDDEE) has biased composition (acidic residues). The segment covering 437 to 446 (ADKKGEENTK) has biased composition (basic and acidic residues).

The protein belongs to the paralemmin family.

The protein resides in the cytoplasm. The protein localises to the cell projection. It is found in the dendrite. Its subcellular location is the dendritic spine. This chain is Palmdelphin (palmd), found in Xenopus laevis (African clawed frog).